The following is an 86-amino-acid chain: MHSFLLATAVPATLSWSPKVAGVMIACNILAIAFGKLTIKQQNVGTPMPSSNFFGGFGLGAVLGTASFGHILGAGVILGLANMGVL.

Transmembrane regions (helical) follow at residues 14–34 and 61–81; these read LSWS…AIAF and AVLG…LGLA.

This sequence belongs to the PsaG/PsaK family.

The protein resides in the cellular thylakoid membrane. The sequence is that of Photosystem I reaction center subunit PsaK 1 (psaK1) from Synechocystis sp. (strain ATCC 27184 / PCC 6803 / Kazusa).